The chain runs to 252 residues: Uracil-DNA glycosylase (252 aa).

Aspartate 87 serves as the catalytic Proton acceptor.

The protein belongs to the uracil-DNA glycosylase (UDG) superfamily. UNG family.

Its subcellular location is the host nucleus. It carries out the reaction Hydrolyzes single-stranded DNA or mismatched double-stranded DNA and polynucleotides, releasing free uracil.. Its function is as follows. Excises uracil residues from the DNA which can arise as a result of misincorporation of dUMP residues by DNA polymerase or deamination of cytosines. Therefore may reduce deleterious uracil incorporation into the viral genome, particularly in terminally differentiated cells which lack DNA repair enzymes. The sequence is that of Uracil-DNA glycosylase (46) from Alcelaphine herpesvirus 1 (strain C500) (AlHV-1).